Consider the following 282-residue polypeptide: Bifunctional protein FolD (282 aa).

NADP(+)-binding positions include 164 to 166 (GAS), isoleucine 189, and isoleucine 230.

The protein belongs to the tetrahydrofolate dehydrogenase/cyclohydrolase family. In terms of assembly, homodimer.

The enzyme catalyses (6R)-5,10-methylene-5,6,7,8-tetrahydrofolate + NADP(+) = (6R)-5,10-methenyltetrahydrofolate + NADPH. It catalyses the reaction (6R)-5,10-methenyltetrahydrofolate + H2O = (6R)-10-formyltetrahydrofolate + H(+). The protein operates within one-carbon metabolism; tetrahydrofolate interconversion. In terms of biological role, catalyzes the oxidation of 5,10-methylenetetrahydrofolate to 5,10-methenyltetrahydrofolate and then the hydrolysis of 5,10-methenyltetrahydrofolate to 10-formyltetrahydrofolate. The protein is Bifunctional protein FolD of Campylobacter jejuni subsp. jejuni serotype O:2 (strain ATCC 700819 / NCTC 11168).